Consider the following 814-residue polypeptide: Glycogen phosphorylase (814 aa).

The residue at position 662 (Lys-662) is an N6-(pyridoxal phosphate)lysine.

It belongs to the glycogen phosphorylase family. The cofactor is pyridoxal 5'-phosphate.

The enzyme catalyses [(1-&gt;4)-alpha-D-glucosyl](n) + phosphate = [(1-&gt;4)-alpha-D-glucosyl](n-1) + alpha-D-glucose 1-phosphate. Functionally, phosphorylase is an important allosteric enzyme in carbohydrate metabolism. Enzymes from different sources differ in their regulatory mechanisms and in their natural substrates. However, all known phosphorylases share catalytic and structural properties. This is Glycogen phosphorylase (glgP) from Chlamydia trachomatis serovar D (strain ATCC VR-885 / DSM 19411 / UW-3/Cx).